A 185-amino-acid polypeptide reads, in one-letter code: Elongation factor P (185 aa).

This sequence belongs to the elongation factor P family.

The protein localises to the cytoplasm. Its pathway is protein biosynthesis; polypeptide chain elongation. In terms of biological role, involved in peptide bond synthesis. Stimulates efficient translation and peptide-bond synthesis on native or reconstituted 70S ribosomes in vitro. Probably functions indirectly by altering the affinity of the ribosome for aminoacyl-tRNA, thus increasing their reactivity as acceptors for peptidyl transferase. The chain is Elongation factor P from Clostridium tetani (strain Massachusetts / E88).